We begin with the raw amino-acid sequence, 256 residues long: Protein FixA (256 aa).

Belongs to the ETF beta-subunit/FixA family. As to quaternary structure, heterodimer of FixA and FixB.

It participates in amine and polyamine metabolism; carnitine metabolism. Required for anaerobic carnitine reduction. May bring reductant to CaiA. This chain is Protein FixA, found in Escherichia coli O7:K1 (strain IAI39 / ExPEC).